Here is a 206-residue protein sequence, read N- to C-terminus: Large ribosomal subunit protein uL4 (206 aa).

Positions 63–97 (MYKQKGTGRARHHSARAPQFRGGGKAHGPVVRSHE) are disordered. The span at 64–77 (YKQKGTGRARHHSA) shows a compositional bias: basic residues.

The protein belongs to the universal ribosomal protein uL4 family. Part of the 50S ribosomal subunit.

Its function is as follows. One of the primary rRNA binding proteins, this protein initially binds near the 5'-end of the 23S rRNA. It is important during the early stages of 50S assembly. It makes multiple contacts with different domains of the 23S rRNA in the assembled 50S subunit and ribosome. In terms of biological role, forms part of the polypeptide exit tunnel. This chain is Large ribosomal subunit protein uL4, found in Rhizobium etli (strain ATCC 51251 / DSM 11541 / JCM 21823 / NBRC 15573 / CFN 42).